We begin with the raw amino-acid sequence, 1588 residues long: Pentafunctional AROM polypeptide (1588 aa).

The interval 1 to 392 (MVQLAKVPIL…YGDSAQFVSD (392 aa)) is 3-dehydroquinate synthase. NAD(+) contacts are provided by residues 43–45 (DTN), 78–81 (ETSK), 109–111 (GGV), and Asp114. Residue Arg125 participates in 7-phospho-2-dehydro-3-deoxy-D-arabino-heptonate binding. 134–135 (TS) is an NAD(+) binding site. Residues Asp141 and Lys147 each coordinate 7-phospho-2-dehydro-3-deoxy-D-arabino-heptonate. Residue Lys156 coordinates NAD(+). Asn157 contacts 7-phospho-2-dehydro-3-deoxy-D-arabino-heptonate. Residues 174-177 (WLET) and Asn185 contribute to the NAD(+) site. Position 189 (Glu189) interacts with Zn(2+). 7-phospho-2-dehydro-3-deoxy-D-arabino-heptonate contacts are provided by residues 189-192 (EVIK) and Lys258. Glu268 serves as the catalytic Proton acceptor; for 3-dehydroquinate synthase activity. 7-phospho-2-dehydro-3-deoxy-D-arabino-heptonate is bound by residues 272-276 (RNLLN) and His279. His279 lines the Zn(2+) pocket. His283 acts as the Proton acceptor; for 3-dehydroquinate synthase activity in catalysis. The 7-phospho-2-dehydro-3-deoxy-D-arabino-heptonate site is built by His295 and Lys364. His295 serves as a coordination point for Zn(2+). An EPSP synthase region spans residues 405–871 (VYPFKDIPAD…WDVLHSELGA (467 aa)). Cys853 functions as the For EPSP synthase activity in the catalytic mechanism. The shikimate kinase stretch occupies residues 890 to 1080 (SVVIIGMRAA…IPSGRSAFVC (191 aa)). Residue 895 to 902 (GMRAAGKT) participates in ATP binding. Residues 1081–1293 (LTFDDLTEQT…AAPGQLTVAQ (213 aa)) are 3-dehydroquinase. His1198 serves as the catalytic Proton acceptor; for 3-dehydroquinate dehydratase activity. The active-site Schiff-base intermediate with substrate; for 3-dehydroquinate dehydratase activity is the Lys1227. Residues 1306 to 1588 (PKELFVVGKP…KAIFDAVTKE (283 aa)) are shikimate dehydrogenase.

The protein in the N-terminal section; belongs to the sugar phosphate cyclases superfamily. Dehydroquinate synthase family. It in the 2nd section; belongs to the EPSP synthase family. In the 3rd section; belongs to the shikimate kinase family. This sequence in the 4th section; belongs to the type-I 3-dehydroquinase family. The protein in the C-terminal section; belongs to the shikimate dehydrogenase family. Homodimer. It depends on Zn(2+) as a cofactor.

It localises to the cytoplasm. It carries out the reaction 7-phospho-2-dehydro-3-deoxy-D-arabino-heptonate = 3-dehydroquinate + phosphate. The enzyme catalyses 3-dehydroquinate = 3-dehydroshikimate + H2O. It catalyses the reaction shikimate + NADP(+) = 3-dehydroshikimate + NADPH + H(+). The catalysed reaction is shikimate + ATP = 3-phosphoshikimate + ADP + H(+). It carries out the reaction 3-phosphoshikimate + phosphoenolpyruvate = 5-O-(1-carboxyvinyl)-3-phosphoshikimate + phosphate. It participates in metabolic intermediate biosynthesis; chorismate biosynthesis; chorismate from D-erythrose 4-phosphate and phosphoenolpyruvate: step 2/7. Its pathway is metabolic intermediate biosynthesis; chorismate biosynthesis; chorismate from D-erythrose 4-phosphate and phosphoenolpyruvate: step 3/7. It functions in the pathway metabolic intermediate biosynthesis; chorismate biosynthesis; chorismate from D-erythrose 4-phosphate and phosphoenolpyruvate: step 4/7. The protein operates within metabolic intermediate biosynthesis; chorismate biosynthesis; chorismate from D-erythrose 4-phosphate and phosphoenolpyruvate: step 5/7. It participates in metabolic intermediate biosynthesis; chorismate biosynthesis; chorismate from D-erythrose 4-phosphate and phosphoenolpyruvate: step 6/7. Its function is as follows. The AROM polypeptide catalyzes 5 consecutive enzymatic reactions in prechorismate polyaromatic amino acid biosynthesis. This Saccharomyces cerevisiae (strain YJM789) (Baker's yeast) protein is Pentafunctional AROM polypeptide.